A 273-amino-acid polypeptide reads, in one-letter code: Large ribosomal subunit protein uL2cz/uL2cy (273 aa).

Disordered stretches follow at residues methionine 1–lysine 23 and asparagine 224–lysine 273. A compositionally biased stretch (basic and acidic residues) spans lysine 262–lysine 273.

This sequence belongs to the universal ribosomal protein uL2 family. Part of the 50S ribosomal subunit.

Its subcellular location is the plastid. It localises to the chloroplast. The protein is Large ribosomal subunit protein uL2cz/uL2cy (rpl2-A) of Acorus calamus var. americanus (American sweet flag).